The chain runs to 1025 residues: Multidrug resistance protein MdtC (1025 aa).

A run of 12 helical transmembrane segments spans residues 16–36 (LLTL…PVAP), 333–353 (EVEQ…FVFL), 360–380 (LIPA…MYLC), 387–407 (LSLM…IVVL), 431–451 (VGFT…PLLM), 459–479 (FFAE…FVSV), 528–548 (WVLL…ISIP), 853–873 (LWLM…LYES), 875–895 (VHPL…LLAL), 897–917 (LFDT…IGIV), 953–973 (PILM…LTSG), and 984–1004 (ITIA…TPVV).

It belongs to the resistance-nodulation-cell division (RND) (TC 2.A.6) family. MdtC subfamily. Part of a tripartite efflux system composed of MdtA, MdtB and MdtC. MdtC forms a heteromultimer with MdtB.

The protein localises to the cell inner membrane. This is Multidrug resistance protein MdtC from Pantoea ananatis (strain AJ13355).